Here is a 63-residue protein sequence, read N- to C-terminus: ORF6 protein (63 aa).

This sequence belongs to the coronaviruses accessory protein 6 family.

It is found in the host endoplasmic reticulum membrane. It localises to the host Golgi apparatus membrane. Could be a determinant of virus virulence. Seems to stimulate cellular DNA synthesis in vitro. The sequence is that of ORF6 protein from Bat coronavirus HKU3 (BtCoV).